Here is an 87-residue protein sequence, read N- to C-terminus: Prohibitin 1 (87 aa).

Phosphothreonine is present on threonine 8. At lysine 62 the chain carries N6-acetyllysine. Tyrosine 83 is modified (phosphotyrosine).

The protein belongs to the prohibitin family. As to quaternary structure, the mitochondrial prohibitin complex consists of two subunits (PHB1 and PHB2), assembled into a membrane-associated ring-shaped supercomplex of approximately 1 mDa. Interacts with STOML2. Interacts with MAP1LC3B (membrane-bound form LC3-II); the interaction requires PHB2 and takes place upon Parkin-mediated mitochondrial damage. Interacts with STAT3 (unphosphorylated or phosphorylated at 'Ser-727'). Interacts with CLPB. Interacts with CD86 (via cytoplasmic domain); the interactions increases after priming with CD40.

The protein localises to the mitochondrion inner membrane. Its subcellular location is the nucleus. The protein resides in the cytoplasm. It localises to the cell membrane. In terms of biological role, protein with pleiotropic attributes mediated in a cell-compartment- and tissue-specific manner, which include the plasma membrane-associated cell signaling functions, mitochondrial chaperone, and transcriptional co-regulator of transcription factors in the nucleus. Plays a role in adipose tissue and glucose homeostasis in a sex-specific manner. Contributes to pulmonary vascular remodeling by accelerating proliferation of pulmonary arterial smooth muscle cells. In the mitochondria, together with PHB2, forms large ring complexes (prohibitin complexes) in the inner mitochondrial membrane (IMM) and functions as a chaperone protein that stabilizes mitochondrial respiratory enzymes and maintains mitochondrial integrity in the IMM, which is required for mitochondrial morphogenesis, neuronal survival, and normal lifespan. The prohibitin complex, with DNAJC19, regulates cardiolipin remodeling and the protein turnover of OMA1 in a cardiolipin-binding manner. Regulates mitochondrial respiration activity playing a role in cellular aging. The prohibitin complex plays a role of mitophagy receptor involved in targeting mitochondria for autophagic degradation. Involved in mitochondrial-mediated antiviral innate immunity, activates RIG-I-mediated signal transduction and production of IFNB1 and proinflammatory cytokine IL6. Functionally, in the nucleus, acts as a transcription coregulator, enhances promoter binding by TP53, a transcription factor it activates, but reduces the promoter binding by E2F1, a transcription factor it represses. Interacts with STAT3 to affect IL17 secretion in T-helper Th17 cells. Its function is as follows. In the plasma membrane, cooperates with CD86 to mediate CD86-signaling in B lymphocytes that regulates the level of IgG1 produced through the activation of distal signaling intermediates. Upon CD40 engagement, required to activate NF-kappa-B signaling pathway via phospholipase C and protein kinase C activation. The protein is Prohibitin 1 (PHB1) of Mesocricetus auratus (Golden hamster).